The following is a 182-amino-acid chain: Ribulose bisphosphate carboxylase small subunit, chloroplastic 5 (182 aa).

Residues 1 to 49 constitute a chloroplast transit peptide; it reads MASSLMSNAATTMAAATTTAQANMVAPFNGLKSISAFPVTRKNNDITSV.

Belongs to the RuBisCO small chain family. In terms of assembly, heterohexadecamer of 8 large and 8 small subunits.

It localises to the plastid. It is found in the chloroplast. RuBisCO catalyzes two reactions: the carboxylation of D-ribulose 1,5-bisphosphate, the primary event in carbon dioxide fixation, as well as the oxidative fragmentation of the pentose substrate. Both reactions occur simultaneously and in competition at the same active site. Although the small subunit is not catalytic it is essential for maximal activity. In Mesembryanthemum crystallinum (Common ice plant), this protein is Ribulose bisphosphate carboxylase small subunit, chloroplastic 5.